A 616-amino-acid chain; its full sequence is Dihydroxy-acid dehydratase (616 aa).

Aspartate 81 is a binding site for Mg(2+). Cysteine 122 is a [2Fe-2S] cluster binding site. Aspartate 123 and lysine 124 together coordinate Mg(2+). N6-carboxylysine is present on lysine 124. Cysteine 195 contacts [2Fe-2S] cluster. Residue glutamate 491 participates in Mg(2+) binding. Residue serine 517 is the Proton acceptor of the active site.

It belongs to the IlvD/Edd family. As to quaternary structure, homodimer. [2Fe-2S] cluster serves as cofactor. Requires Mg(2+) as cofactor.

It carries out the reaction (2R)-2,3-dihydroxy-3-methylbutanoate = 3-methyl-2-oxobutanoate + H2O. The enzyme catalyses (2R,3R)-2,3-dihydroxy-3-methylpentanoate = (S)-3-methyl-2-oxopentanoate + H2O. Its pathway is amino-acid biosynthesis; L-isoleucine biosynthesis; L-isoleucine from 2-oxobutanoate: step 3/4. The protein operates within amino-acid biosynthesis; L-valine biosynthesis; L-valine from pyruvate: step 3/4. In terms of biological role, functions in the biosynthesis of branched-chain amino acids. Catalyzes the dehydration of (2R,3R)-2,3-dihydroxy-3-methylpentanoate (2,3-dihydroxy-3-methylvalerate) into 2-oxo-3-methylpentanoate (2-oxo-3-methylvalerate) and of (2R)-2,3-dihydroxy-3-methylbutanoate (2,3-dihydroxyisovalerate) into 2-oxo-3-methylbutanoate (2-oxoisovalerate), the penultimate precursor to L-isoleucine and L-valine, respectively. The sequence is that of Dihydroxy-acid dehydratase from Klebsiella pneumoniae (strain 342).